The primary structure comprises 321 residues: MSSPLLTLNNGLKMPQIGFGCWKVDNATCAETIYEAIKVGYRLFDGAMDYGNEKEVGEGVNKAIKDGLVKREELFIVSKLWNNFHHPDSVKLAIKKVLSDLNLEYIDLFYMHFPIAQKFVPIEKKYPPNFYCGDGDKWSFEDVPLLTTWRAMEELVEEGLVKSIGISNFVGALIQDLLRGCKIRPAVLEIEHHPYLVQPRLIEYAKTEGIHVTAYSSFGPQSFVELDHPKVKDCTTLFKHETITSIASAHDVPPAKVLLRWATQRGLAVIPKSNKKERLLGNLKINDFDLTEAELEKIEALDIGLRFNDPWTWGYNIPTFI.

Residue Tyr-50 is the Proton donor of the active site. His-112 serves as a coordination point for substrate. NADP(+)-binding positions include 167 to 168 (SN), 216 to 225 (SSFGPQSFVE), and 272 to 282 (KSNKKERLLGN).

This sequence belongs to the aldo/keto reductase family.

The catalysed reaction is xylitol + NAD(+) = D-xylose + NADH + H(+). It catalyses the reaction xylitol + NADP(+) = D-xylose + NADPH + H(+). It participates in carbohydrate metabolism; D-xylose degradation. Functionally, reduces D-xylose into xylitol. Preferentially utilizes NADPH as a cosubstrate. The sequence is that of NADPH-dependent D-xylose reductase (XYL1) from Candida boidinii (Yeast).